A 462-amino-acid polypeptide reads, in one-letter code: Neuronal acetylcholine receptor subunit non-alpha-2 (462 aa).

Residues 1–30 (MTLAVIGLFTLFTSIIAITPAREFVSLAER) form the signal peptide. The Extracellular portion of the chain corresponds to 31-234 (EDALLRELFQ…ITYSFILKRL (204 aa)). Residues asparagine 53 and asparagine 168 are each glycosylated (N-linked (GlcNAc...) asparagine). Cysteine 155 and cysteine 169 are joined by a disulfide. 3 helical membrane passes run 235 to 259 (PLFY…VFYL), 267 to 284 (VSLS…LLVI), and 301 to 322 (YLLF…VINV). Topologically, residues 323–428 (HHRSSATYHP…WKFVAQVLDR (106 aa)) are cytoplasmic. Positions 362–372 (ELEPHSPDLKP) are enriched in basic and acidic residues. A disordered region spans residues 362-384 (ELEPHSPDLKPRNKKGPPGPEGE). Residues 429 to 446 (IFLWTFLTVSVLGTILIF) traverse the membrane as a helical segment.

This sequence belongs to the ligand-gated ion channel (TC 1.A.9) family. Acetylcholine receptor (TC 1.A.9.1) subfamily. In terms of assembly, neuronal AChR seems to be composed of two different type of subunits: alpha and beta.

Its subcellular location is the postsynaptic cell membrane. The protein resides in the cell membrane. Functionally, after binding acetylcholine, the AChR responds by an extensive change in conformation that affects all subunits and leads to opening of an ion-conducting channel across the plasma membrane. The sequence is that of Neuronal acetylcholine receptor subunit non-alpha-2 from Carassius auratus (Goldfish).